We begin with the raw amino-acid sequence, 77 residues long: Translation initiation factor IF-1, chloroplastic (77 aa).

The 71-residue stretch at 1–71 folds into the S1-like domain; sequence MKEQKLIHEG…TKGRIIYRLR (71 aa).

Belongs to the IF-1 family. In terms of assembly, component of the 30S ribosomal translation pre-initiation complex which assembles on the 30S ribosome in the order IF-2 and IF-3, IF-1 and N-formylmethionyl-tRNA(fMet); mRNA recruitment can occur at any time during PIC assembly.

The protein resides in the plastid. Its subcellular location is the chloroplast. Its function is as follows. One of the essential components for the initiation of protein synthesis. Stabilizes the binding of IF-2 and IF-3 on the 30S subunit to which N-formylmethionyl-tRNA(fMet) subsequently binds. Helps modulate mRNA selection, yielding the 30S pre-initiation complex (PIC). Upon addition of the 50S ribosomal subunit IF-1, IF-2 and IF-3 are released leaving the mature 70S translation initiation complex. This is Translation initiation factor IF-1, chloroplastic from Drimys granadensis.